Here is a 970-residue protein sequence, read N- to C-terminus: Transcriptional activator protein DAL81 (970 aa).

Disordered stretches follow at residues 1-44 (MDPH…NHDI), 64-95 (NILREKGGSQQQQHQQQQQQQQQQQQQQQQQS), and 118-140 (DNVSNSADHNGSNSNNNNNNNDI). Low complexity-rich tracts occupy residues 15–41 (TKSVKATTKNSSTNNNVNSNNSNNNSN), 73–94 (QQQQHQQQQQQQQQQQQQQQQQ), and 121–140 (SNSADHNGSNSNNNNNNNDI). Positions 150–179 (CNQCRLKKTKCNYFPDLGNCLECETSRTKC) form a DNA-binding region, zn(2)-C6 fungal-type. The segment covering 807 to 823 (SFPNGTTSTTTPVNPTS) has biased composition (low complexity). Residues 807–970 (SFPNGTTSTT…VTINTRETPL (164 aa)) form a disordered region. Polar residues-rich tracts occupy residues 824–836 (RQTQLESQGSPAI) and 858–870 (KTSQSSPNVTPSH). A Phosphoserine modification is found at S833. The span at 875-894 (PPSNTSSPRVNSSTNVNSNT) shows a compositional bias: low complexity. Polar residues predominate over residues 895–906 (QMNASPLTSINE). A compositionally biased stretch (basic and acidic residues) spans 907–938 (TRQESGDAADEKTAGRERTANEESSTELKDDN). 2 stretches are compositionally biased toward polar residues: residues 939–954 (PNSNQETSATGNQTIK) and 961–970 (VTINTRETPL).

The protein resides in the nucleus. In terms of biological role, positive regulation of genes required for catabolism of GABA (UGA4, UGA1, and UGA2), urea (DUR1 and DUR2), arginine and allantoin. The protein is Transcriptional activator protein DAL81 (DAL81) of Saccharomyces cerevisiae (strain ATCC 204508 / S288c) (Baker's yeast).